A 635-amino-acid polypeptide reads, in one-letter code: Two-component response regulator ARR18 (635 aa).

The 115-residue stretch at 19-133 (RVLAVDDNPT…ELQNIWHHVV (115 aa)) folds into the Response regulatory domain. D70 carries the post-translational modification 4-aspartylphosphate. 2 disordered regions span residues 144 to 196 (LPPS…KKPR) and 323 to 342 (IQQG…GTYH). Over residues 166-186 (SGDEDDSDREEDDGEGSEQDG) the composition is skewed to acidic residues. The Nuclear localization signal signature appears at 193-196 (KKPR). The segment at residues 196–246 (RVVWSQELHQKFVSAVQQLGLDKAVPKKILDLMSIEGLTRENVASHLQKYR) is a DNA-binding region (myb-like GARP).

This sequence belongs to the ARR family. Type-B subfamily. As to quaternary structure, binds the target DNA as a monomer. In terms of processing, two-component system major event consists of a His-to-Asp phosphorelay between a sensor histidine kinase (HK) and a response regulator (RR). In plants, the His-to-Asp phosphorelay involves an additional intermediate named Histidine-containing phosphotransfer protein (HPt). This multistep phosphorelay consists of a His-Asp-His-Asp sequential transfer of a phosphate group between first a His and an Asp of the HK protein, followed by the transfer to a conserved His of the HPt protein and finally the transfer to an Asp in the receiver domain of the RR protein. Predominantly expressed in young leaf tissue developing anthers, and siliques.

It is found in the nucleus. In terms of biological role, transcriptional activator that binds specifically to the DNA sequence 5'-[AG]GATT-3'. Functions as a response regulator involved in His-to-Asp phosphorelay signal transduction system. Phosphorylation of the Asp residue in the receiver domain activates the ability of the protein to promote the transcription of target genes. Could directly activate some type-A response regulators in response to cytokinins. The polypeptide is Two-component response regulator ARR18 (ARR18) (Arabidopsis thaliana (Mouse-ear cress)).